The primary structure comprises 271 residues: Putative phosphoenolpyruvate synthase regulatory protein (271 aa).

An ADP-binding site is contributed by 151–158 (GVSRSGKT).

It belongs to the pyruvate, phosphate/water dikinase regulatory protein family. PSRP subfamily.

It carries out the reaction [pyruvate, water dikinase] + ADP = [pyruvate, water dikinase]-phosphate + AMP + H(+). The catalysed reaction is [pyruvate, water dikinase]-phosphate + phosphate + H(+) = [pyruvate, water dikinase] + diphosphate. Bifunctional serine/threonine kinase and phosphorylase involved in the regulation of the phosphoenolpyruvate synthase (PEPS) by catalyzing its phosphorylation/dephosphorylation. In Burkholderia thailandensis (strain ATCC 700388 / DSM 13276 / CCUG 48851 / CIP 106301 / E264), this protein is Putative phosphoenolpyruvate synthase regulatory protein.